Reading from the N-terminus, the 514-residue chain is Alpha-1B adrenergic receptor (514 aa).

Residues 1–45 (MNPDLDTGHNTSAPAHWGELKDANFTGPNQTSSNSTLPQLDVTRA) are Extracellular-facing. 4 N-linked (GlcNAc...) asparagine glycosylation sites follow: asparagine 10, asparagine 24, asparagine 29, and asparagine 34. Residues 46 to 69 (ISVGCLGAFILFAIVGNILVILSV) traverse the membrane as a helical segment. Residues 70-82 (ACNRHLRTPTNYF) lie on the Cytoplasmic side of the membrane. The helical transmembrane segment at 83 to 104 (IVNLAIADLLLSFTDLPFSATL) threads the bilayer. The Extracellular portion of the chain corresponds to 105-114 (EVLGYWVLGR). The helical transmembrane segment at 115–140 (IFCDIWAAVDVLCCTASILSLCAISI) threads the bilayer. The cysteines at positions 117 and 194 are disulfide-linked. Topologically, residues 141-160 (DRYIGVRYSLQYPTLVTRRK) are cytoplasmic. Residues 161 to 183 (AILALLSVWVLSTVISIGPLLGW) form a helical membrane-spanning segment. Residues 184-200 (KEPAPNDDKECGVTEEP) lie on the Extracellular side of the membrane. A helical transmembrane segment spans residues 201–223 (FYALFSSLGSFYIPLAVILVMYC). Topologically, residues 224–294 (RVYIVAKRTT…FSREKKAAKT (71 aa)) are cytoplasmic. Threonine 263 carries the post-translational modification Phosphothreonine. Residues 295-318 (LGIVVGMFILCWLPFFIALPLGSL) form a helical membrane-spanning segment. The Extracellular portion of the chain corresponds to 319-325 (FSTLKPP). The helical transmembrane segment at 326 to 350 (DAVFKVVFWLGYFNSCLNPIIYPCS) threads the bilayer. Topologically, residues 351-514 (SKEFKRAFMR…SNMPLAPGHF (164 aa)) are cytoplasmic. The S-palmitoyl cysteine moiety is linked to residue cysteine 364. The short motif at 367-377 (RGGRRRRRRRR) is the Nuclear localization signal element. 2 disordered regions span residues 391 to 429 (GGSL…GYLG) and 473 to 514 (LGEP…PGHF). Residues 409-423 (SCMSGSQRTLPSASP) show a composition bias toward polar residues.

The protein belongs to the G-protein coupled receptor 1 family. Adrenergic receptor subfamily. ADRA1B sub-subfamily. In terms of assembly, homo- and heterooligomer. Heterooligomerizes with ADRA1B homooligomers in cardiac myocytes. Interacts with CAVIN4.

The protein resides in the nucleus membrane. It localises to the cell membrane. It is found in the cytoplasm. The protein localises to the membrane. Its subcellular location is the caveola. This alpha-adrenergic receptor mediates its action by association with G proteins that activate a phosphatidylinositol-calcium second messenger system. Its effect is mediated by G(q) and G(11) proteins. Nuclear ADRA1A-ADRA1B heterooligomers regulate phenylephrine (PE)-stimulated ERK signaling in cardiac myocytes. The chain is Alpha-1B adrenergic receptor (Adra1b) from Mus musculus (Mouse).